The following is a 190-amino-acid chain: Putative glutathione-dependent formaldehyde-activating enzyme (190 aa).

The CENP-V/GFA domain maps to 19 to 165 (FKGGKLYCHC…FRKEGLQTYD (147 aa)). Zn(2+) contacts are provided by Cys-26, Cys-28, Cys-47, Cys-49, Cys-52, Cys-94, and Cys-97.

The protein belongs to the Gfa family. The cofactor is Zn(2+).

The enzyme catalyses S-(hydroxymethyl)glutathione = glutathione + formaldehyde. Its pathway is one-carbon metabolism; formaldehyde degradation; formate from formaldehyde (glutathione route): step 1/3. Functionally, catalyzes the condensation of formaldehyde and glutathione to S-hydroxymethylglutathione. In Phaeosphaeria nodorum (strain SN15 / ATCC MYA-4574 / FGSC 10173) (Glume blotch fungus), this protein is Putative glutathione-dependent formaldehyde-activating enzyme.